Here is a 113-residue protein sequence, read N- to C-terminus: Neocarzinostatin (113 aa).

2 disulfides stabilise this stretch: C37-C47 and C88-C93.

It belongs to the neocarzinostatin family.

NCS has antibiotic activity (for Gram-positive bacteria) and antitumor activity (for certain mouse tumors). NCS binds non-covalently to a chromophore which is the cytotoxic and mutagenic component of the antibiotic. The chromophore binds to DNA as a weak intercalator and causes single- and double-strand breaks. This is Neocarzinostatin (ncsA) from Streptomyces malayensis.